The sequence spans 373 residues: Ubiquitin domain-containing protein DSK2 (373 aa).

Residues 1 to 76 enclose the Ubiquitin-like domain; that stretch reads MSLNIHIKSG…SVHLVKSQPK (76 aa). Residues Lys-13 and Lys-76 each participate in a glycyl lysine isopeptide (Lys-Gly) (interchain with G-Cter in ubiquitin) cross-link. A disordered region spans residues 221 to 270; it reads DPNAGMGSAGGAASAFPAPGGDAPEEGSNTNTTSSSNTGNNAGTNAGTNA. Positions 231–270 are enriched in low complexity; the sequence is GAASAFPAPGGDAPEEGSNTNTTSSSNTGNNAGTNAGTNA. A UBA domain is found at 327-371; sequence PPEERYEHQLRQLNDMGFFDFDRNVAALRRSGGSVQGALDSLLNG.

The protein localises to the nucleus. Involved, with RAD23 in spindle pole body duplication. Involved in the ubiquitin-proteasome proteolytic pathway. This Saccharomyces cerevisiae (strain ATCC 204508 / S288c) (Baker's yeast) protein is Ubiquitin domain-containing protein DSK2 (DSK2).